The sequence spans 900 residues: Translation initiation factor IF-2 (900 aa).

A disordered region spans residues 48-310; it reads HLNRDRGNAP…KPSSLQQSFN (263 aa). The segment covering 68–82 has biased composition (polar residues); that stretch reads STLNVPSTGGKSKSV. Basic and acidic residues-rich tracts occupy residues 85 to 98 and 108 to 164; these read EVRK…RDPI and QARR…KEKV. Residues 165–176 show a composition bias toward polar residues; sequence TNQQNENMTKPA. Over residues 177–237 the composition is skewed to basic and acidic residues; that stretch reads QSEKAKREAE…SATKPEESAD (61 aa). Residues 263–277 show a composition bias toward basic residues; the sequence is TRTRAAKVTKQKKGN. Residues 278–291 show a composition bias toward basic and acidic residues; that stretch reads RQSESKADREEARA. A tr-type G domain is found at 399 to 568; that stretch reads FRAPVVTIMG…LLQAEVLELK (170 aa). The G1 stretch occupies residues 408 to 415; it reads GHVDHGKT. Residue 408-415 coordinates GTP; that stretch reads GHVDHGKT. The G2 stretch occupies residues 433–437; that stretch reads GITQH. Positions 454–457 are G3; that stretch reads DTPG. Residues 454 to 458 and 508 to 511 each bind GTP; these read DTPGH and NKID. The interval 508–511 is G4; it reads NKID. The interval 544–546 is G5; sequence SAK.

The protein belongs to the TRAFAC class translation factor GTPase superfamily. Classic translation factor GTPase family. IF-2 subfamily.

It localises to the cytoplasm. Its function is as follows. One of the essential components for the initiation of protein synthesis. Protects formylmethionyl-tRNA from spontaneous hydrolysis and promotes its binding to the 30S ribosomal subunits. Also involved in the hydrolysis of GTP during the formation of the 70S ribosomal complex. The chain is Translation initiation factor IF-2 from Pectobacterium atrosepticum (strain SCRI 1043 / ATCC BAA-672) (Erwinia carotovora subsp. atroseptica).